The sequence spans 185 residues: Ribosome-recycling factor (185 aa).

This sequence belongs to the RRF family.

The protein localises to the cytoplasm. Functionally, responsible for the release of ribosomes from messenger RNA at the termination of protein biosynthesis. May increase the efficiency of translation by recycling ribosomes from one round of translation to another. This is Ribosome-recycling factor from Streptococcus pneumoniae serotype 2 (strain D39 / NCTC 7466).